A 319-amino-acid polypeptide reads, in one-letter code: MSLNFLDFEQPIAELEAKIDSLTAVSRQDEKLDINIDEEVHRLREKSVELTRKIFADLGAWQIAQLARHPQRPYTLDYVRLAFDEFDELAGDRAYADDKAIVGGIARLDGRPVMIIGHQKGRETKEKIRRNFGMPAPEGYRKALRLMQMAERFKMPIITFIDTPGAYPGVGAEERGQSEAIARNLREMSRLGVPVVCTVIGEGGSGGALAIGVGDKVNMLQYSSYSVISPEGCASILWKSADKAPLAAEAMGIIAPRLKELKLIDSIIPEPLGGAHRNPEAMAASLKAQLLADLADLDVLSTEDLKNRRYQRLMSYGYA.

The region spanning 35 to 296 (NIDEEVHRLR…KAQLLADLAD (262 aa)) is the CoA carboxyltransferase C-terminal domain.

This sequence belongs to the AccA family. Acetyl-CoA carboxylase is a heterohexamer composed of biotin carboxyl carrier protein (AccB), biotin carboxylase (AccC) and two subunits each of ACCase subunit alpha (AccA) and ACCase subunit beta (AccD).

It localises to the cytoplasm. It carries out the reaction N(6)-carboxybiotinyl-L-lysyl-[protein] + acetyl-CoA = N(6)-biotinyl-L-lysyl-[protein] + malonyl-CoA. It participates in lipid metabolism; malonyl-CoA biosynthesis; malonyl-CoA from acetyl-CoA: step 1/1. Component of the acetyl coenzyme A carboxylase (ACC) complex. First, biotin carboxylase catalyzes the carboxylation of biotin on its carrier protein (BCCP) and then the CO(2) group is transferred by the carboxyltransferase to acetyl-CoA to form malonyl-CoA. The sequence is that of Acetyl-coenzyme A carboxylase carboxyl transferase subunit alpha from Shigella boydii serotype 4 (strain Sb227).